The chain runs to 73 residues: ATP synthase subunit c (73 aa).

2 consecutive transmembrane segments (helical) span residues 4 to 24 and 51 to 71; these read LAIG…GIGI and GALA…IIIF.

This sequence belongs to the ATPase C chain family. In terms of assembly, F-type ATPases have 2 components, F(1) - the catalytic core - and F(0) - the membrane proton channel. F(1) has five subunits: alpha(3), beta(3), gamma(1), delta(1), epsilon(1). F(0) has three main subunits: a(1), b(2) and c(10-14). The alpha and beta chains form an alternating ring which encloses part of the gamma chain. F(1) is attached to F(0) by a central stalk formed by the gamma and epsilon chains, while a peripheral stalk is formed by the delta and b chains.

The protein resides in the cell membrane. In terms of biological role, f(1)F(0) ATP synthase produces ATP from ADP in the presence of a proton or sodium gradient. F-type ATPases consist of two structural domains, F(1) containing the extramembraneous catalytic core and F(0) containing the membrane proton channel, linked together by a central stalk and a peripheral stalk. During catalysis, ATP synthesis in the catalytic domain of F(1) is coupled via a rotary mechanism of the central stalk subunits to proton translocation. Functionally, key component of the F(0) channel; it plays a direct role in translocation across the membrane. A homomeric c-ring of between 10-14 subunits forms the central stalk rotor element with the F(1) delta and epsilon subunits. The protein is ATP synthase subunit c of Caldanaerobacter subterraneus subsp. tengcongensis (strain DSM 15242 / JCM 11007 / NBRC 100824 / MB4) (Thermoanaerobacter tengcongensis).